A 191-amino-acid chain; its full sequence is Glycerol-3-phosphate acyltransferase (191 aa).

A run of 5 helical transmembrane segments spans residues 5–25 (IVFV…ITKI), 50–70 (CIAA…VYIA), 78–98 (SFHM…PVWL), 112–132 (ILIA…LAVF), and 153–173 (SFFF…LIFF).

The protein belongs to the PlsY family. As to quaternary structure, probably interacts with PlsX.

It is found in the cell membrane. The catalysed reaction is an acyl phosphate + sn-glycerol 3-phosphate = a 1-acyl-sn-glycero-3-phosphate + phosphate. It participates in lipid metabolism; phospholipid metabolism. In terms of biological role, catalyzes the transfer of an acyl group from acyl-phosphate (acyl-PO(4)) to glycerol-3-phosphate (G3P) to form lysophosphatidic acid (LPA). This enzyme utilizes acyl-phosphate as fatty acyl donor, but not acyl-CoA or acyl-ACP. This Wolbachia sp. subsp. Brugia malayi (strain TRS) protein is Glycerol-3-phosphate acyltransferase.